The sequence spans 83 residues: Small ribosomal subunit protein uS17 (83 aa).

This sequence belongs to the universal ribosomal protein uS17 family. As to quaternary structure, part of the 30S ribosomal subunit.

One of the primary rRNA binding proteins, it binds specifically to the 5'-end of 16S ribosomal RNA. The chain is Small ribosomal subunit protein uS17 from Zymomonas mobilis subsp. mobilis (strain ATCC 31821 / ZM4 / CP4).